The sequence spans 138 residues: Basic phospholipase A2 DAV-N6 (138 aa).

The signal sequence occupies residues 1-16 (MRTLWIVAVLLVSVEG). 7 disulfide bridges follow: Cys42-Cys131, Cys44-Cys60, Cys59-Cys111, Cys65-Cys138, Cys66-Cys104, Cys73-Cys97, and Cys91-Cys102. The Ca(2+) site is built by Tyr43, Gly45, and Gly47. The active site involves His63. Residue Asp64 coordinates Ca(2+). Asp105 is an active-site residue.

Ca(2+) serves as cofactor. In terms of tissue distribution, expressed by the venom gland.

The protein resides in the secreted. The catalysed reaction is a 1,2-diacyl-sn-glycero-3-phosphocholine + H2O = a 1-acyl-sn-glycero-3-phosphocholine + a fatty acid + H(+). Functionally, snake venom phospholipase A2 (PLA2) that inhibits neuromuscular transmission by blocking acetylcholine release from the nerve termini. PLA2 catalyzes the calcium-dependent hydrolysis of the 2-acyl groups in 3-sn-phosphoglycerides. The polypeptide is Basic phospholipase A2 DAV-N6 (Deinagkistrodon acutus (Hundred-pace snake)).